We begin with the raw amino-acid sequence, 247 residues long: Isoprenyl transferase (247 aa).

D18 is an active-site residue. D18 provides a ligand contact to Mg(2+). Substrate is bound by residues 19-22, W23, R31, H35, and 63-65; these read GNGR and SSE. N66 serves as the catalytic Proton acceptor. Substrate is bound by residues W67, R69, R186, and 192–194; that span reads RLS. Mg(2+) is bound at residue E205.

It belongs to the UPP synthase family. As to quaternary structure, homodimer. Requires Mg(2+) as cofactor.

Catalyzes the condensation of isopentenyl diphosphate (IPP) with allylic pyrophosphates generating different type of terpenoids. This chain is Isoprenyl transferase, found in Agrobacterium fabrum (strain C58 / ATCC 33970) (Agrobacterium tumefaciens (strain C58)).